A 768-amino-acid polypeptide reads, in one-letter code: Envelope glycoprotein gp160 (768 aa).

Positions 1-16 (MTKFLGIFIVLGIGIG) are cleaved as a signal peptide. At 17-701 (IGISTKQQWI…SWFDFSKWLN (685 aa)) the chain is on the extracellular side. Asn37 carries an N-linked (GlcNAc...) asparagine; by host glycan. Cysteines 44 and 57 form a disulfide. N-linked (GlcNAc...) asparagine; by host glycans are attached at residues Asn70, Asn141, Asn151, Asn166, Asn181, Asn200, and Asn211. Disulfide bonds link Cys103-Cys219, Cys110-Cys210, Cys115-Cys167, Cys232-Cys262, and Cys242-Cys254. Residues 115–166 (CVELKGSATSTPATSTTAGTKLPCVRNKTDSNLQSCNDTIIEKEMNDEAASN) are V1. A V2 region spans residues 167 to 210 (CTFAMAGYIRDQKKNYSVVWNDAEIFCKRSTSHNGTKECYMIHC). N-linked (GlcNAc...) asparagine; by host glycosylation is found at Asn256, Asn267, Asn277, Asn283, Asn295, Asn307, Asn317, Asn374, Asn415, Asn490, and Asn493. A V3 region spans residues 312-344 (CKRPGNKTVLPVTIMAGLVFHSQKYNTRLRQAW). A disulfide bond links Cys312 and Cys345. 2 disulfide bridges follow: Cys397/Cys473 and Cys404/Cys446. The segment at 404–446 (CKMDWFLNYLNNLTVDADHNHCKNNAGKGRSPGPCVQRTYVAC) is V4. A V5 region spans residues 489 to 496 (QNRTNVTL). Residues 539-559 (VPFVLGFLGFLGAAGTAMGAA) form a fusion peptide region. The interval 602 to 618 (LNARVTALEKYLADQAR) is immunosuppression. Residues Asn646 and Asn662 are each glycosylated (N-linked (GlcNAc...) asparagine; by host). Positions 650 to 687 (LEWEKQIEGLEGNITKQLEQAREQEEKNLDAYQKLSDW) form a coiled coil. Residues 683–704 (KLSDWSSFWSWFDFSKWLNILK) are MPER; binding to GalCer. The chain crosses the membrane as a helical span at residues 702-722 (ILKIGFLAVIGVIGLRLLYTL). Topologically, residues 723–768 (YTCIARVRQGYSPLSPQIHIHPWKGQPDNAGEPEEGGRTGKSKSTH) are cytoplasmic. The YXXL motif; contains endocytosis signal motif lies at 733–736 (YSPL). Residues 744–768 (PWKGQPDNAGEPEEGGRTGKSKSTH) form a disordered region.

The mature envelope protein (Env) consists of a homotrimer of non-covalently associated gp120-gp41 heterodimers. The resulting complex protrudes from the virus surface as a spike. Interacts with host CD4 and CCR5. Gp120 also interacts with the C-type lectins CD209/DC-SIGN and CLEC4M/DC-SIGNR (collectively referred to as DC-SIGN(R)). In terms of assembly, the mature envelope protein (Env) consists of a homotrimer of non-covalently associated gp120-gp41 heterodimers. The resulting complex protrudes from the virus surface as a spike. Post-translationally, specific enzymatic cleavages in vivo yield mature proteins. Envelope glycoproteins are synthesized as an inactive precursor that is heavily N-glycosylated and processed likely by host cell furin in the Golgi to yield the mature SU and TM proteins. The cleavage site between SU and TM requires the minimal sequence [KR]-X-[KR]-R.

It localises to the virion membrane. It is found in the host cell membrane. Its subcellular location is the host endosome membrane. Functionally, the surface protein gp120 (SU) attaches the virus to the host lymphoid cell by binding to the primary receptor CD4. This interaction induces a structural rearrangement creating a high affinity binding site for a chemokine coreceptor like CCR5. This peculiar 2 stage receptor-interaction strategy allows gp120 to maintain the highly conserved coreceptor-binding site in a cryptic conformation, protected from neutralizing antibodies. These changes are transmitted to the transmembrane protein gp41 and are thought to activate its fusogenic potential by unmasking its fusion peptide. Surface protein gp120 (SU) may target the virus to gut-associated lymphoid tissue (GALT) by binding host ITGA4/ITGB7 (alpha-4/beta-7 integrins), a complex that mediates T-cell migration to the GALT. Interaction between gp120 and ITGA4/ITGB7 would allow the virus to enter GALT early in the infection, infecting and killing most of GALT's resting CD4+ T-cells. This T-cell depletion is believed to be the major insult to the host immune system leading to AIDS. Its function is as follows. The surface protein gp120 is a ligand for CD209/DC-SIGN and CLEC4M/DC-SIGNR, which are respectively found on dendritic cells (DCs), and on endothelial cells of liver sinusoids and lymph node sinuses. These interactions allow capture of viral particles at mucosal surfaces by these cells and subsequent transmission to permissive cells. DCs are professional antigen presenting cells, critical for host immunity by inducing specific immune responses against a broad variety of pathogens. They act as sentinels in various tissues where they take up antigen, process it, and present it to T-cells following migration to lymphoid organs. SIV subverts the migration properties of dendritic cells to gain access to CD4+ T-cells in lymph nodes. Virus transmission to permissive T-cells occurs either in trans (without DCs infection, through viral capture and transmission), or in cis (following DCs productive infection, through the usual CD4-gp120 interaction), thereby inducing a robust infection. In trans infection, bound virions remain infectious over days and it is proposed that they are not degraded, but protected in non-lysosomal acidic organelles within the DCs close to the cell membrane thus contributing to the viral infectious potential during DCs' migration from the periphery to the lymphoid tissues. On arrival at lymphoid tissues, intact virions recycle back to DCs' cell surface allowing virus transmission to CD4+ T-cells. Virion capture also seems to lead to MHC-II-restricted viral antigen presentation, and probably to the activation of SIV-specific CD4+ cells. In terms of biological role, the transmembrane protein gp41 (TM) acts as a class I viral fusion protein. Under the current model, the protein has at least 3 conformational states: pre-fusion native state, pre-hairpin intermediate state, and post-fusion hairpin state. During fusion of viral and target intracellular membranes, the coiled coil regions (heptad repeats) assume a trimer-of-hairpins structure, positioning the fusion peptide in close proximity to the C-terminal region of the ectodomain. The formation of this structure appears to drive apposition and subsequent fusion of viral and target cell membranes. Complete fusion occurs in host cell endosomes. The virus undergoes clathrin-dependent internalization long before endosomal fusion, thus minimizing the surface exposure of conserved viral epitopes during fusion and reducing the efficacy of inhibitors targeting these epitopes. Membranes fusion leads to delivery of the nucleocapsid into the cytoplasm. Functionally, the envelope glycoprotein gp160 precursor down-modulates cell surface CD4 antigen by interacting with it in the endoplasmic reticulum and blocking its transport to the cell surface. The gp120-gp41 heterodimer allows rapid transcytosis of the virus through CD4 negative cells such as simple epithelial monolayers of the intestinal, rectal and endocervical epithelial barriers. Both gp120 and gp41 specifically recognize glycosphingolipids galactosyl-ceramide (GalCer) or 3' sulfo-galactosyl-ceramide (GalS) present in the lipid rafts structures of epithelial cells. Binding to these alternative receptors allows the rapid transcytosis of the virus through the epithelial cells. This transcytotic vesicle-mediated transport of virions from the apical side to the basolateral side of the epithelial cells does not involve infection of the cells themselves. This Simian immunodeficiency virus agm.vervet (isolate AGM155) (SIV-agm.ver) protein is Envelope glycoprotein gp160 (env).